We begin with the raw amino-acid sequence, 459 residues long: Exodeoxyribonuclease 7 large subunit (459 aa).

The protein belongs to the XseA family. As to quaternary structure, heterooligomer composed of large and small subunits.

The protein resides in the cytoplasm. It catalyses the reaction Exonucleolytic cleavage in either 5'- to 3'- or 3'- to 5'-direction to yield nucleoside 5'-phosphates.. Bidirectionally degrades single-stranded DNA into large acid-insoluble oligonucleotides, which are then degraded further into small acid-soluble oligonucleotides. This chain is Exodeoxyribonuclease 7 large subunit, found in Pseudomonas putida (strain ATCC 47054 / DSM 6125 / CFBP 8728 / NCIMB 11950 / KT2440).